Reading from the N-terminus, the 520-residue chain is MLSRTRAAAPNSRIFTRSLLRLYSQAPLRVPITLPNGFTYEQPTGLFINGEFVASKQKKTFDVINPSNEEKITTVYKAMEDDVDEAVAAAKKAFETKWSIVEPEVRAKALFNLADLVEKHQETLAAIESMDNGKSLFCARGDVALVSKYLRSCGGWADKIYGNVIDTGKNHFTYSIKEPLGVCGQIIPWNFPLLMWSWKIGPALATGNTVVLKPAETTPLSALFASQLCQEAGIPAGVVNILPGSGRVVGERLSAHPDVKKIAFTGSTATGRHIMKVAADTVKKVTLELGGKSPNIVFADADLDKAVKNIAFGIFYNSGEVCCAGSRIYIQDTVYEEVLQKLKDYTESLKVGDPFDEEVFQGAQTSDKQLHKILDYVDVAKSEGARLVTGGARHGSKGYFVKPTVFADVKEDMRIVKEEVFGPIVTVSKFSTVDEVIAMANDSQYGLAAGIHTNDINKAVDVSKRVKAGTVWINTYNNFHQNVPFGGFGQSGIGREMGEAALSNYTQTKSVRIAIDKPIR.

The transit peptide at 1–23 (MLSRTRAAAPNSRIFTRSLLRLY) directs the protein to the mitochondrion. 266–271 (GSTATG) contacts NAD(+). Glutamate 288 serves as the catalytic Proton acceptor. Catalysis depends on cysteine 322, which acts as the Nucleophile.

This sequence belongs to the aldehyde dehydrogenase family.

It localises to the mitochondrion matrix. It catalyses the reaction an aldehyde + NADP(+) + H2O = a carboxylate + NADPH + 2 H(+). The catalysed reaction is an aldehyde + NAD(+) + H2O = a carboxylate + NADH + 2 H(+). It participates in alcohol metabolism; ethanol degradation; acetate from ethanol: step 2/2. Its activity is regulated as follows. Induced by potassium ions. Minor mitochondrial aldehyde dehydrogenase isoform. Plays a role in regulation or biosynthesis of electron transport chain components. Involved in the biosynthesis of acetate during anaerobic growth on glucose. The chain is Aldehyde dehydrogenase 5, mitochondrial (ALD5) from Saccharomyces cerevisiae (strain YJM789) (Baker's yeast).